The sequence spans 230 residues: Large ribosomal subunit protein uL1 (230 aa).

This sequence belongs to the universal ribosomal protein uL1 family. In terms of assembly, part of the 50S ribosomal subunit.

Binds directly to 23S rRNA. The L1 stalk is quite mobile in the ribosome, and is involved in E site tRNA release. Its function is as follows. Protein L1 is also a translational repressor protein, it controls the translation of the L11 operon by binding to its mRNA. The polypeptide is Large ribosomal subunit protein uL1 (Methylobacillus flagellatus (strain ATCC 51484 / DSM 6875 / VKM B-1610 / KT)).